A 509-amino-acid chain; its full sequence is Dye-decolorizing peroxidase AauDyP1 (509 aa).

The first 22 residues, 1–22, serve as a signal peptide directing secretion; that stretch reads MRLSPVFVALLSGLLAADLGLA. Positions 23-61 are excised as a propeptide; sequence RSVAPRVADSPAAVTGTRKTSLLKNVAGLPPVPSAAQVA. The active-site Proton acceptor is the aspartate 229. Residue asparagine 343 is glycosylated (N-linked (GlcNAc...) asparagine). Histidine 365 contributes to the heme binding site. Asparagine 383, asparagine 410, and asparagine 476 each carry an N-linked (GlcNAc...) asparagine glycan.

This sequence belongs to the DyP-type peroxidase family. Requires heme b as cofactor.

The protein localises to the secreted. The catalysed reaction is Reactive Blue 5 + 2 H2O2 = 2,2'-disulfonyl azobenzene + 3-[(4-amino-6-chloro-1,3,5-triazin-2-yl)amino]benzenesulfonate + phthalate + 2 H2O + 2 H(+). It catalyses the reaction 2 a phenolic donor + H2O2 = 2 a phenolic radical donor + 2 H2O. Inhibited by imidazole. Manganese-independent peroxidase that is able to convert a large number of compounds, but its physiological substrate is not known. In addition to classic peroxidase substrates (e.g. 2,6-dimethoxyphenol), oxidizes dyes such as Reactive Blue 5 and Reactive Black 5. The chain is Dye-decolorizing peroxidase AauDyP1 from Auricularia auricula-judae (Judas ear fungus).